The chain runs to 121 residues: Prefoldin subunit beta (121 aa).

It belongs to the prefoldin subunit beta family. In terms of assembly, heterohexamer of two alpha and four beta subunits.

It localises to the cytoplasm. Functionally, molecular chaperone capable of stabilizing a range of proteins. Seems to fulfill an ATP-independent, HSP70-like function in archaeal de novo protein folding. In Methanoculleus marisnigri (strain ATCC 35101 / DSM 1498 / JR1), this protein is Prefoldin subunit beta.